The chain runs to 622 residues: Threonine--tRNA ligase (622 aa).

An editing domain region spans residues 1–141 (MKTLLIHSDY…SRKITTERKE (141 aa)). Positions 199–498 (PHVKYIKEKE…TLENKPPALP (300 aa)) are catalytic. C291, H343, and H467 together coordinate Zn(2+).

The protein belongs to the class-II aminoacyl-tRNA synthetase family. Homodimer. The cofactor is Zn(2+).

Its subcellular location is the cytoplasm. It catalyses the reaction tRNA(Thr) + L-threonine + ATP = L-threonyl-tRNA(Thr) + AMP + diphosphate + H(+). In terms of biological role, catalyzes the attachment of threonine to tRNA(Thr) in a two-step reaction: L-threonine is first activated by ATP to form Thr-AMP and then transferred to the acceptor end of tRNA(Thr). Also edits incorrectly charged L-seryl-tRNA(Thr). This is Threonine--tRNA ligase from Methanococcus maripaludis (strain C7 / ATCC BAA-1331).